The primary structure comprises 66 residues: Beta-mammal toxin Co2 (66 aa).

Positions 1–66 constitute an LCN-type CS-alpha/beta domain; that stretch reads KEGYIVNYHD…VWPLPKKRCN (66 aa). Intrachain disulfides connect Cys12–Cys65, Cys16–Cys41, Cys25–Cys46, and Cys29–Cys48.

Expressed by the venom gland.

The protein localises to the secreted. In terms of biological role, beta toxins bind voltage-independently at site-4 of sodium channels (Nav) and shift the voltage of activation toward more negative potentials thereby affecting sodium channel activation and promoting spontaneous and repetitive firing. This toxin acts on human Nav1.1/SCN1A, Nav1.2/SCN2A, Nav1.4/SCN4A and Nav1.6/SCN8A voltage-gated sodium channels. Also, it reduces the peak of sodium currents in Nav1.5/SCN5A at all potentials. In vivo, is lethal to mice when intraperitoneally injected at a dose of 5ug. No activity is observed when injected into crickets or woodlice. The polypeptide is Beta-mammal toxin Co2 (Centruroides ornatus (Scorpion)).